A 355-amino-acid polypeptide reads, in one-letter code: tRNA N6-adenosine threonylcarbamoyltransferase (355 aa).

2 residues coordinate Fe cation: histidine 111 and histidine 115. Substrate contacts are provided by residues 134 to 138 (LVSGG), aspartate 167, glycine 180, aspartate 184, and asparagine 279. A Fe cation-binding site is contributed by aspartate 307.

Belongs to the KAE1 / TsaD family. It depends on Fe(2+) as a cofactor.

The protein localises to the cytoplasm. The catalysed reaction is L-threonylcarbamoyladenylate + adenosine(37) in tRNA = N(6)-L-threonylcarbamoyladenosine(37) in tRNA + AMP + H(+). Required for the formation of a threonylcarbamoyl group on adenosine at position 37 (t(6)A37) in tRNAs that read codons beginning with adenine. Is involved in the transfer of the threonylcarbamoyl moiety of threonylcarbamoyl-AMP (TC-AMP) to the N6 group of A37, together with TsaE and TsaB. TsaD likely plays a direct catalytic role in this reaction. The polypeptide is tRNA N6-adenosine threonylcarbamoyltransferase (Picosynechococcus sp. (strain ATCC 27264 / PCC 7002 / PR-6) (Agmenellum quadruplicatum)).